Consider the following 739-residue polypeptide: Copalyl diphosphate synthase 1 (739 aa).

Lysine 154 serves as a coordination point for substrate. Residues aspartate 287 and aspartate 289 each coordinate Mg(2+). Residues aspartate 287–aspartate 290 carry the DXDD motif motif. Residue lysine 373 participates in substrate binding.

This sequence belongs to the terpene synthase family. The cofactor is Mg(2+).

It catalyses the reaction (2E,6E,10E)-geranylgeranyl diphosphate = (+)-copalyl diphosphate. It participates in secondary metabolite biosynthesis; terpenoid biosynthesis. Monofunctional diterpene synthase converting geranylgeranyl diphosphate to copalyl diphosphate. The sequence is that of Copalyl diphosphate synthase 1 (CPS1) from Selaginella moellendorffii (Spikemoss).